The following is a 388-amino-acid chain: Fructose-bisphosphate aldolase, chloroplastic (388 aa).

The N-terminal 38 residues, 1-38 (MASATLLKSSFLPKKSEWGATRQAAAPKPVTVSMVVRA), are a transit peptide targeting the chloroplast. A substrate-binding site is contributed by Arg-72. The active-site Proton acceptor is the Glu-215. Lys-257 functions as the Schiff-base intermediate with dihydroxyacetone-P in the catalytic mechanism. Substrate contacts are provided by residues 299–301 (SGG) and Arg-329.

This sequence belongs to the class I fructose-bisphosphate aldolase family. Homotetramer. In terms of tissue distribution, expressed in leaf mesophyll cells.

It is found in the plastid. The protein localises to the chloroplast. It localises to the plastoglobule. It carries out the reaction beta-D-fructose 1,6-bisphosphate = D-glyceraldehyde 3-phosphate + dihydroxyacetone phosphate. It functions in the pathway carbohydrate degradation; glycolysis; D-glyceraldehyde 3-phosphate and glycerone phosphate from D-glucose: step 4/4. Its function is as follows. Plays a key role in glycolysis and gluconeogenesis. In Oryza sativa subsp. japonica (Rice), this protein is Fructose-bisphosphate aldolase, chloroplastic.